Here is a 1415-residue protein sequence, read N- to C-terminus: G8 domain-containing protein DDB_G0278975 (1415 aa).

An N-terminal signal peptide occupies residues 1 to 24; sequence MKINKIILFFFLSCLYLFSSSVSA. 2 consecutive transmembrane segments (helical) span residues 107-127 and 138-158; these read INLNSLILISFSTIITFGLFT and LLFIVLLICISIFNLSNSIKI. Residues N245, N366, N428, N466, and N579 are each glycosylated (N-linked (GlcNAc...) asparagine). The 127-residue stretch at 566–692 folds into the G8 domain; sequence STWPNGIIPS…YHNTWSKLSA (127 aa). 2 PbH1 repeats span residues 819–841 and 842–864; these read LKNSYISDCSVTNSYYRCYTIHG and TNNVTLTRNVAFDVSGHCYYLED. N-linked (GlcNAc...) asparagine glycosylation is found at N844, N985, N1009, N1023, N1099, N1244, and N1342.

The protein belongs to the comF family.

The protein resides in the membrane. This Dictyostelium discoideum (Social amoeba) protein is G8 domain-containing protein DDB_G0278975.